The sequence spans 65 residues: Potassium channel toxin alpha-KTx 12.6 (65 aa).

The signal sequence occupies residues 1-22; that stretch reads MKMKIFIITIVIALFITSIVEA. 3 disulfide bridges follow: Cys30/Cys51, Cys36/Cys56, and Cys40/Cys58.

The protein belongs to the short scorpion toxin superfamily. Potassium channel inhibitor family. Alpha-KTx 12 subfamily. In terms of tissue distribution, expressed by the venom gland.

It is found in the secreted. Its function is as follows. Inhibits voltage-gated potassium channels. In Lychas mucronatus (Chinese swimming scorpion), this protein is Potassium channel toxin alpha-KTx 12.6.